Consider the following 650-residue polypeptide: Macrolide export ATP-binding/permease protein MacB (650 aa).

The ABC transporter domain occupies 5-243; sequence LELKDIRRSY…AGGTEPVVNT (239 aa). 41–48 provides a ligand contact to ATP; sequence GASGSGKS. Transmembrane regions (helical) follow at residues 273–293, 523–543, 554–574, 580–600, and 613–633; these read LLTM…VVVG, LFLT…VMNI, ANDI…HLFF, VLPA…AFTL, and PLAL…FGWL.

The protein belongs to the ABC transporter superfamily. Macrolide exporter (TC 3.A.1.122) family. Homodimer. Part of the tripartite efflux system MacAB-TolC, which is composed of an inner membrane transporter, MacB, a periplasmic membrane fusion protein, MacA, and an outer membrane component, TolC. The complex forms a large protein conduit and can translocate molecules across both the inner and outer membranes. Interacts with MacA.

It localises to the cell inner membrane. Part of the tripartite efflux system MacAB-TolC. MacB is a non-canonical ABC transporter that contains transmembrane domains (TMD), which form a pore in the inner membrane, and an ATP-binding domain (NBD), which is responsible for energy generation. Confers resistance against macrolides. This chain is Macrolide export ATP-binding/permease protein MacB, found in Shigella dysenteriae serotype 1 (strain Sd197).